The following is a 389-amino-acid chain: Protein WALLS ARE THIN 1 (389 aa).

The next 10 membrane-spanning stretches (helical) occupy residues 18-38, 49-69, 76-96, 111-131, 143-163, 198-218, 230-250, 266-286, 294-314, and 319-339; these read LQLH…HVVS, LVFP…FAYF, PAIT…GITA, TFAS…AALL, GISK…ITLY, WTLG…WLVF, LSVT…IAAF, LFTI…VQIW, VFVA…ASIA, and FYLG…FVLY. 2 consecutive EamA domains span residues 32–161 and 210–339; these read AGFH…SVIT and LSWS…FVLY. Position 372 is a phosphoserine (Ser372).

The protein belongs to the drug/metabolite transporter (DMT) superfamily. Plant drug/metabolite exporter (P-DME) (TC 2.A.7.4) family. As to expression, mostly expressed in stems and hypocotyls, also present in seedlings, root, leaves, flowers and siliques. Ubiquitous, mostly expressed in vascular tissues and secondary wall-forming cells, including developing xylem vessels and fibers.

It localises to the vacuole membrane. Required for secondary wall formation in fibers, especially in short days conditions. Promotes indole metabolism and transport (e.g. tryptophan, neoglucobrassicin and auxin (indole-3-acetic acid)). May prevent salicylic-acid (SA) accumulation. In Arabidopsis thaliana (Mouse-ear cress), this protein is Protein WALLS ARE THIN 1 (WAT1).